The chain runs to 66 residues: Omega conotoxin-CVIE (66 aa).

Positions 1–17 (VVIVAVLLLTACQLITA) are cleaved as a signal peptide. Positions 18–40 (NDSRGTQKHRALRSDTKLSMSTR) are excised as a propeptide. 3 disulfides stabilise this stretch: C41–C56, C48–C60, and C55–C65. Residue C65 is modified to Cysteine amide.

Belongs to the conotoxin O1 superfamily. In terms of tissue distribution, expressed by the venom duct.

The protein localises to the secreted. Its function is as follows. Omega-conotoxins act at presynaptic membranes, they bind and block voltage-gated calcium channels. This toxin blocks N-type calcium channels (Cav2.2/CACNA1B). It shows a higher potency when Cav2.2/CACNA1B is only expressed with the ancillary subunit CACNB3 (IC(50)=0.12 nM) than on Cav2.2/CACNA1B expressed with the ancillary subunits CACNA2D1 and CACNB3 (IC(50)=2.6 nM). The Cav2.2/CACNA1B block by this toxin is voltage-independent, whereas the recovery from toxin block is voltage-dependent. There is a low recovery at physiological membrane potential and a high recovery with hyperpolarized potential. This indicates that the toxin has a higher affinity for Cav2.2/CACNA1B in the inactivated state. It is noteworthy that ancillary subunits beta modulate recovery from this toxin block. Cav2.2/CACNA1B expressed with the ancillary subunit CACNB2a (isoform 2a) almost recover completely from this toxin block, whereas Cav2.2/CACNA1B expressed with CACNB3 exhibits relatively weak recovery. Inhibition by this toxin of excitatory synaptic transmission is reversible. In vivo, when tested on rat model of persistent pain, this toxin blocks chronic pain behavior. The chain is Omega conotoxin-CVIE from Conus catus (Cat cone).